The sequence spans 430 residues: MDRIRIVGGNELNGIIPISGAKNAALPLMIASLLTSDTLTLENVPHLADVELLMRILGNHGVDVAVNGRRERQEDSYARTIHFTCRTIVDTTASYELVSKMRASFWVIGPLLAREGHCRVSLPGGCAIGTRPVDLFIEGLTALGATMEIDAGYINAKAPDGGLIGARYTFPKVSVGATHVMMMAATLARGTTVIGNAAREPEVVDLANCLNAMGAKISGAGTATITIEGVTSLSGARHRVLPDRIETGTYAMAVAMAGGDVVLENTDVALLETAVETLRRAGADISATNNGMRIKRNGAGIKPVDIVTDPFPGFPTDLQAQFMALMTRSSGISHVTETIFENRFMHVQELARLGARITLSGQTAKIEGVQRLRGAPVMATDLRASVSLVIAGLAAEGETTVSRVYHLDRGFERLEEKLTRCGAVVQRISE.

22–23 (KN) serves as a coordination point for phosphoenolpyruvate. Position 102 (arginine 102) interacts with UDP-N-acetyl-alpha-D-glucosamine. The Proton donor role is filled by cysteine 126. At cysteine 126 the chain carries 2-(S-cysteinyl)pyruvic acid O-phosphothioketal. Residues 131-135 (RPVDL), 172-175 (KVSV), aspartate 317, and isoleucine 339 each bind UDP-N-acetyl-alpha-D-glucosamine.

It belongs to the EPSP synthase family. MurA subfamily.

It localises to the cytoplasm. It carries out the reaction phosphoenolpyruvate + UDP-N-acetyl-alpha-D-glucosamine = UDP-N-acetyl-3-O-(1-carboxyvinyl)-alpha-D-glucosamine + phosphate. It participates in cell wall biogenesis; peptidoglycan biosynthesis. Functionally, cell wall formation. Adds enolpyruvyl to UDP-N-acetylglucosamine. The sequence is that of UDP-N-acetylglucosamine 1-carboxyvinyltransferase from Rhizobium etli (strain CIAT 652).